Consider the following 27-residue polypeptide: L-amino-acid oxidase (27 aa).

As to quaternary structure, homodimer; non-covalently linked. The cofactor is FAD. In terms of processing, contains 2 disulfide bonds. N-glycosylated. In terms of tissue distribution, expressed by the venom gland.

The protein resides in the secreted. The enzyme catalyses an L-alpha-amino acid + O2 + H2O = a 2-oxocarboxylate + H2O2 + NH4(+). It catalyses the reaction L-leucine + O2 + H2O = 4-methyl-2-oxopentanoate + H2O2 + NH4(+). Catalyzes an oxidative deamination of predominantly hydrophobic and aromatic L-amino acids, thus producing hydrogen peroxide that may contribute to the diverse toxic effects of this enzyme. Shows activity on L-Leu. Exhibits diverse biological activities, such as hemolysis, edema, apoptosis, as well as induction of platelet aggregation. Effects of snake L-amino oxidases on platelets are controversial, since they either induce aggregation or inhibit agonist-induced aggregation. These different effects are probably due to different experimental conditions. Unlike other snake venom L-amino acid oxidases, does not induce hemorrhage. This protein may also have antibacterial and antiparasitic activities. In Eristicophis macmahoni (Leaf-nosed viper), this protein is L-amino-acid oxidase.